Reading from the N-terminus, the 294-residue chain is Protease HtpX (294 aa).

Helical transmembrane passes span 4–24 and 34–52; these read IALF…VLSL and GLLI…VSLM. His-139 contributes to the Zn(2+) binding site. Glu-140 is a catalytic residue. His-143 lines the Zn(2+) pocket. 2 consecutive transmembrane segments (helical) span residues 158–178 and 194–214; these read VVNT…AGFL and LIYF…ASII. Glu-223 contacts Zn(2+).

The protein belongs to the peptidase M48B family. Zn(2+) is required as a cofactor.

It is found in the cell inner membrane. The protein is Protease HtpX of Klebsiella pneumoniae subsp. pneumoniae (strain ATCC 700721 / MGH 78578).